The primary structure comprises 154 residues: Aspartate carbamoyltransferase regulatory chain (154 aa).

4 residues coordinate Zn(2+): Cys-109, Cys-114, Cys-138, and Cys-141.

This sequence belongs to the PyrI family. Contains catalytic and regulatory chains. Zn(2+) is required as a cofactor.

Its function is as follows. Involved in allosteric regulation of aspartate carbamoyltransferase. The polypeptide is Aspartate carbamoyltransferase regulatory chain (Tolumonas auensis (strain DSM 9187 / NBRC 110442 / TA 4)).